A 251-amino-acid chain; its full sequence is Cell division protein ZapD (251 aa).

This sequence belongs to the ZapD family. In terms of assembly, interacts with FtsZ.

It is found in the cytoplasm. Functionally, cell division factor that enhances FtsZ-ring assembly. Directly interacts with FtsZ and promotes bundling of FtsZ protofilaments, with a reduction in FtsZ GTPase activity. In Burkholderia mallei (strain NCTC 10247), this protein is Cell division protein ZapD.